Reading from the N-terminus, the 458-residue chain is UDP-N-acetylmuramoylalanine--D-glutamate ligase (458 aa).

Residue 124–130 (GSDGKTT) coordinates ATP.

This sequence belongs to the MurCDEF family.

The protein localises to the cytoplasm. The catalysed reaction is UDP-N-acetyl-alpha-D-muramoyl-L-alanine + D-glutamate + ATP = UDP-N-acetyl-alpha-D-muramoyl-L-alanyl-D-glutamate + ADP + phosphate + H(+). It functions in the pathway cell wall biogenesis; peptidoglycan biosynthesis. Functionally, cell wall formation. Catalyzes the addition of glutamate to the nucleotide precursor UDP-N-acetylmuramoyl-L-alanine (UMA). The chain is UDP-N-acetylmuramoylalanine--D-glutamate ligase from Clostridium botulinum (strain Langeland / NCTC 10281 / Type F).